A 101-amino-acid chain; its full sequence is Phosphoprotein OPG062 (101 aa).

A disordered region spans residues 50–73 (KPSSPTCERRPSSPSRCERMNNPG). A compositionally biased stretch (basic and acidic residues) spans 56–68 (CERRPSSPSRCER).

This sequence belongs to the orthopoxvirus OPG062 family. In terms of assembly, self-associates to form high molecular-weight forms. Interacts with protein OPG157. Interacts with host RICTOR and RPTOR; these interactions disrupt the mTORC1 and mTORC2 crosstalk.

It localises to the virion. In terms of biological role, plays an essential role in virion assembly and morphogenesis. Also plays a role in the inhibition of host immune response by dysregulating mTOR. Sequesters host RICTOR and RPTOR, thereby disrupting mTORC1 and mTORC2 crosstalk. In turn, blocks the host antiviral response in part through mTOR-dependent degradation of cGAS, the primary poxvirus sensor. The sequence is that of Phosphoprotein OPG062 (OPG062) from Monkeypox virus.